The primary structure comprises 300 residues: Bifunctional protein FolD 2 (300 aa).

Residues 165–167, S190, and I231 contribute to the NADP(+) site; that span reads GRS.

This sequence belongs to the tetrahydrofolate dehydrogenase/cyclohydrolase family. In terms of assembly, homodimer.

It catalyses the reaction (6R)-5,10-methylene-5,6,7,8-tetrahydrofolate + NADP(+) = (6R)-5,10-methenyltetrahydrofolate + NADPH. The enzyme catalyses (6R)-5,10-methenyltetrahydrofolate + H2O = (6R)-10-formyltetrahydrofolate + H(+). Its pathway is one-carbon metabolism; tetrahydrofolate interconversion. Catalyzes the oxidation of 5,10-methylenetetrahydrofolate to 5,10-methenyltetrahydrofolate and then the hydrolysis of 5,10-methenyltetrahydrofolate to 10-formyltetrahydrofolate. This Pseudomonas savastanoi pv. phaseolicola (strain 1448A / Race 6) (Pseudomonas syringae pv. phaseolicola (strain 1448A / Race 6)) protein is Bifunctional protein FolD 2.